The following is a 97-amino-acid chain: Large ribosomal subunit protein eL21 (97 aa).

The interval 1–26 is disordered; the sequence is MQKSEGFRSKTRYKLQKHPRQKGMAP. Over residues 9–21 the composition is skewed to basic residues; it reads SKTRYKLQKHPRQ.

The protein belongs to the eukaryotic ribosomal protein eL21 family.

The polypeptide is Large ribosomal subunit protein eL21 (Methanococcus maripaludis (strain C6 / ATCC BAA-1332)).